Here is a 108-residue protein sequence, read N- to C-terminus: uncharacterized protein (108 aa).

Residues M1–A20 form the signal peptide. An N-linked (GlcNAc...) asparagine glycan is attached at N39.

The protein belongs to the Dictyostelium gerABC family.

Its subcellular location is the secreted. This is an uncharacterized protein from Dictyostelium discoideum (Social amoeba).